Reading from the N-terminus, the 278-residue chain is MTVLHSVDFFPSGNASVAIEPRLPQADFPEHHHDFHEIVIVEHGTGIHVFNGQPYTITGGTVCFVRDHDRHLYEHTDNLCLTNVLYRSPDRFQFLAGLNQLLPQELDGQYPSHWRVNHSVLQQVRQLVAQMEQQEGENDLPSTASREILFMQLLLLLRKSSLQENLENSASRLNLLLAWLEDHFADEVNWDAVAEQFSLSLRTLHRQLKQQTGLTPQRYLNRLRLMKARHLLRHSEASVTDIAYRCGFSDSNHFSTLFRREFNWSPRDIRQGRDGFLQ.

The region spanning 174–272 (NLLLAWLEDH…NWSPRDIRQG (99 aa)) is the HTH araC/xylS-type domain. 2 consecutive DNA-binding regions (H-T-H motif) follow at residues 191 to 212 (DAVA…KQQT) and 239 to 262 (VTDI…RREF).

As to quaternary structure, binds DNA as a dimer.

It is found in the cytoplasm. Its function is as follows. Activates expression of the rhaBAD and rhaT operons. The polypeptide is HTH-type transcriptional activator RhaS (Escherichia coli (strain SE11)).